Here is a 602-residue protein sequence, read N- to C-terminus: Elongation factor 4 (602 aa).

Residues 7 to 188 (ENIRNFSIIA…AIVELIPPPK (182 aa)) enclose the tr-type G domain. GTP-binding positions include 19–24 (DHGKST) and 135–138 (NKID).

The protein belongs to the TRAFAC class translation factor GTPase superfamily. Classic translation factor GTPase family. LepA subfamily.

The protein localises to the cell inner membrane. The catalysed reaction is GTP + H2O = GDP + phosphate + H(+). Required for accurate and efficient protein synthesis under certain stress conditions. May act as a fidelity factor of the translation reaction, by catalyzing a one-codon backward translocation of tRNAs on improperly translocated ribosomes. Back-translocation proceeds from a post-translocation (POST) complex to a pre-translocation (PRE) complex, thus giving elongation factor G a second chance to translocate the tRNAs correctly. Binds to ribosomes in a GTP-dependent manner. In Chlamydia abortus (strain DSM 27085 / S26/3) (Chlamydophila abortus), this protein is Elongation factor 4.